The chain runs to 528 residues: Cytochrome P450 monooxygenase ppsD (528 aa).

A helical transmembrane segment spans residues 2–21; it reads LVLVSLVLCLTGFCLLQWAL. N137 is a glycosylation site (N-linked (GlcNAc...) asparagine). C441 lines the heme pocket. 2 N-linked (GlcNAc...) asparagine glycosylation sites follow: N450 and N463.

The protein belongs to the cytochrome P450 family. Heme serves as cofactor.

Its subcellular location is the membrane. In terms of biological role, cytochrome P450 monooxygenase; part of the gene cluster that mediates the biosynthesis of 2,4'-dihydroxy-3'-methoxypropiophenone. The first step of the pathway is the conversion of acetate into acetyl-CoA by the acyl-CoA ligase ppsA. Acetyl-CoA is then used as a starter unit by the polyketide synthase ppsB and condensed with 4 malonyl-CoA unit to produce the pentaketide backbone. During polyketide extension, the polykedite chain is probably reduced and dehydrated by the KR and PT domains, respectively. O-methylation seems to be catalyzed by an unknown methyltransferase rather than by the CMeT domain of ppsB. Two hydroxylations and one further decarboxylation step catalyzed by yet unknown enzymes are then required to yield 4'-hydroxy-3'-methoxypropiophenone. PpsC functions as a carrier protein to transport 4'-hydroxy-3'-methoxypropiophenone to a specific cell compartment in which 4'-hydroxy-3'-methoxypropiophenone is hydroxylated to 2,4'-dihydroxy-3'-methoxypropiophenone by a still to be identified enzyme. The polypeptide is Cytochrome P450 monooxygenase ppsD (Aspergillus oryzae (strain ATCC 42149 / RIB 40) (Yellow koji mold)).